The following is a 251-amino-acid chain: Endoglucanase CX (251 aa).

It belongs to the glycosyl hydrolase 9 (cellulase E) family.

It carries out the reaction Endohydrolysis of (1-&gt;4)-beta-D-glucosidic linkages in cellulose, lichenin and cereal beta-D-glucans.. Its function is as follows. Degrades carboxymethylcellulose (CMC). In Prunus persica (Peach), this protein is Endoglucanase CX.